The primary structure comprises 1183 residues: Probable RNA-dependent RNA polymerase 4 (1183 aa).

Belongs to the RdRP family. Expressed in shoot apical meristem (SAM) and panicles.

The catalysed reaction is RNA(n) + a ribonucleoside 5'-triphosphate = RNA(n+1) + diphosphate. Functionally, probably involved in the RNA silencing pathway and required for the generation of small interfering RNAs (siRNAs). The protein is Probable RNA-dependent RNA polymerase 4 (RDR4) of Oryza sativa subsp. japonica (Rice).